The sequence spans 84 residues: Delta-thalatoxin-Cad1a (84 aa).

The signal sequence occupies residues 1-19 (MAYLKIVLVALMLVLAVSA). A propeptide spanning residues 20–33 (MRRPDQQDQDISVA) is cleaved from the precursor. 3 cysteine pairs are disulfide-bonded: C38-C78, C40-C68, and C61-C79.

The protein belongs to the sea anemone sodium channel inhibitory toxin family. Type II subfamily.

Its subcellular location is the secreted. It is found in the nematocyst. In terms of biological role, binds specifically to the voltage-gated sodium channel (Nav) and delays its inactivation. The polypeptide is Delta-thalatoxin-Cad1a (Cryptodendrum adhaesivum (Adhesive sea anemone)).